Consider the following 241-residue polypeptide: Platelet-derived growth factor subunit B (241 aa).

The first 20 residues, 1 to 20 (MNRCWALFLPLCCYLRLVSA), serve as a signal peptide directing secretion. A propeptide spans 21–81 (EGDPIPEELY…ELESSSRGRR (61 aa)) (removed in mature form). An N-linked (GlcNAc...) asparagine glycan is attached at Asn63. Cystine bridges form between Cys97–Cys141, Cys130–Cys178, and Cys134–Cys180. Residues 191–241 (RSPGTSREQRAKTPQARVTIRTVRIRRPPKGKHRKFKHTHDKAALKETLGA) constitute a propeptide, removed in mature form. Residues 217-230 (RPPKGKHRKFKHTH) show a composition bias toward basic residues. Residues 217–241 (RPPKGKHRKFKHTHDKAALKETLGA) are disordered.

It belongs to the PDGF/VEGF growth factor family. As to quaternary structure, antiparallel homodimer; disulfide-linked. Antiparallel heterodimer with PDGFA; disulfide-linked. The PDGFB homodimer interacts with PDGFRA and PDGFRB homodimers, and with heterodimers formed by PDGFRA and PDGFRB. The heterodimer composed of PDGFA and PDGFB interacts with PDGFRB homodimers, and with heterodimers formed by PDGFRA and PDGFRB. Interacts with XLKD1. Interacts with LRP1. Interacts with SORL1 (via the N-terminal ectodomain). Interacts with CD82; this interaction inhibits PDGFB-mediated signaling pathway. As to expression, localized to vascular smooth muscle cells. Also weakly expressed by cortical interstitial cells but absent in tubules. Up-regulated in areas of renal fibrosis. In mice with unilateral ureteral obstruction, an increased expression in interstitial cells and in some tubules observed after day 4.

Its subcellular location is the secreted. Its function is as follows. Growth factor that plays an essential role in the regulation of embryonic development, cell proliferation, cell migration, survival and chemotaxis. Potent mitogen for cells of mesenchymal origin. Required for normal proliferation and recruitment of pericytes and vascular smooth muscle cells in the central nervous system, skin, lung, heart and placenta. Required for normal blood vessel development, and for normal development of kidney glomeruli. Plays an important role in wound healing. Signaling is modulated by the formation of heterodimers with PDGFA. This is Platelet-derived growth factor subunit B (Pdgfb) from Mus musculus (Mouse).